The primary structure comprises 356 residues: MEQRRIVHIDMDAFYASVKQRDDPSLRGRPLAVGRGEARGVVAAASYEARRFGVRSAMPSVTAKRLCPELLFVPARFDVYRSVSAQIHDIFSRYTPLIQPLSLDEAYLDLTDHLGAYGSATLVADRIRADIHAETGLTASAGVSYNRFLAKLASDYRKPDGLFVITPAMGPEFVAALPVDAFHGIGPAMARKMRALGIETGADLRERDIETLTRHFGKAATFYYGISRGIDHRPVVVNRERKSLGTEQTYLRDLTSEADAHQALTQIAATLWGSAQRRQLQARTVTLKVKYADFRQITRARTLSAPVPSEEVLLETGQSLMAPLFPFVPGVRLLGLTLSGFHAAESPPCDQMELLF.

Residues 6 to 186 (IVHIDMDAFY…LPVDAFHGIG (181 aa)) form the UmuC domain. Mg(2+)-binding residues include D10 and D104. E105 is a catalytic residue.

This sequence belongs to the DNA polymerase type-Y family. In terms of assembly, monomer. The cofactor is Mg(2+).

It localises to the cytoplasm. The catalysed reaction is DNA(n) + a 2'-deoxyribonucleoside 5'-triphosphate = DNA(n+1) + diphosphate. Poorly processive, error-prone DNA polymerase involved in untargeted mutagenesis. Copies undamaged DNA at stalled replication forks, which arise in vivo from mismatched or misaligned primer ends. These misaligned primers can be extended by PolIV. Exhibits no 3'-5' exonuclease (proofreading) activity. May be involved in translesional synthesis, in conjunction with the beta clamp from PolIII. The chain is DNA polymerase IV from Gluconobacter oxydans (strain 621H) (Gluconobacter suboxydans).